Reading from the N-terminus, the 202-residue chain is Small ribosomal subunit protein uS4c (202 aa).

An S4 RNA-binding domain is found at 90-159 (MRLDNIIFRL…TKNYEFSQTY (70 aa)).

Belongs to the universal ribosomal protein uS4 family. As to quaternary structure, part of the 30S ribosomal subunit. Contacts protein S5. The interaction surface between S4 and S5 is involved in control of translational fidelity.

The protein localises to the plastid. It localises to the chloroplast. Functionally, one of the primary rRNA binding proteins, it binds directly to 16S rRNA where it nucleates assembly of the body of the 30S subunit. Its function is as follows. With S5 and S12 plays an important role in translational accuracy. The polypeptide is Small ribosomal subunit protein uS4c (rps4) (Huperzia lucidula (Shining clubmoss)).